A 348-amino-acid chain; its full sequence is Phosphoribosylformylglycinamidine cyclo-ligase (348 aa).

It belongs to the AIR synthase family.

It localises to the cytoplasm. The enzyme catalyses 2-formamido-N(1)-(5-O-phospho-beta-D-ribosyl)acetamidine + ATP = 5-amino-1-(5-phospho-beta-D-ribosyl)imidazole + ADP + phosphate + H(+). The protein operates within purine metabolism; IMP biosynthesis via de novo pathway; 5-amino-1-(5-phospho-D-ribosyl)imidazole from N(2)-formyl-N(1)-(5-phospho-D-ribosyl)glycinamide: step 2/2. In Cereibacter sphaeroides (strain KD131 / KCTC 12085) (Rhodobacter sphaeroides), this protein is Phosphoribosylformylglycinamidine cyclo-ligase.